A 310-amino-acid polypeptide reads, in one-letter code: Putative S-adenosyl-L-methionine-dependent methyltransferase MUL_4763 (310 aa).

S-adenosyl-L-methionine is bound by residues Asp137 and 166–167; that span reads DL.

Belongs to the UPF0677 family.

Functionally, exhibits S-adenosyl-L-methionine-dependent methyltransferase activity. This chain is Putative S-adenosyl-L-methionine-dependent methyltransferase MUL_4763, found in Mycobacterium ulcerans (strain Agy99).